We begin with the raw amino-acid sequence, 250 residues long: UPF0193 protein EVG1 homolog (250 aa).

A disordered region spans residues 86 to 110; the sequence is ESLRNGEPLPLPEPPRPNTNNDPDK.

This sequence belongs to the UPF0193 (EVG1) family.

The protein is UPF0193 protein EVG1 homolog of Drosophila melanogaster (Fruit fly).